Here is a 55-residue protein sequence, read N- to C-terminus: Large ribosomal subunit protein bL33 (55 aa).

The protein belongs to the bacterial ribosomal protein bL33 family.

This is Large ribosomal subunit protein bL33 from Aeromonas hydrophila subsp. hydrophila (strain ATCC 7966 / DSM 30187 / BCRC 13018 / CCUG 14551 / JCM 1027 / KCTC 2358 / NCIMB 9240 / NCTC 8049).